The sequence spans 229 residues: Ribonuclease 3 (229 aa).

Residues 5–127 (LARLERQLGY…LIGAIYLDAG (123 aa)) form the RNase III domain. Glu-40 contacts Mg(2+). Asp-44 is a catalytic residue. Mg(2+) is bound by residues Asp-113 and Glu-116. Glu-116 is an active-site residue. The DRBM domain maps to 154–224 (DPKTRLQEFL…AAAALIALGV (71 aa)).

Belongs to the ribonuclease III family. In terms of assembly, homodimer. It depends on Mg(2+) as a cofactor.

Its subcellular location is the cytoplasm. It carries out the reaction Endonucleolytic cleavage to 5'-phosphomonoester.. Digests double-stranded RNA. Involved in the processing of primary rRNA transcript to yield the immediate precursors to the large and small rRNAs (23S and 16S). Processes some mRNAs, and tRNAs when they are encoded in the rRNA operon. Processes pre-crRNA and tracrRNA of type II CRISPR loci if present in the organism. This chain is Ribonuclease 3, found in Pseudomonas fluorescens (strain SBW25).